We begin with the raw amino-acid sequence, 599 residues long: MLELWGVLSLTSLGVMVIFLFSKIKSSFAESVKYAGYMNAVLLSILLMSDESEMLFLKWEWVKLGGYSLMISFRFDLYTCCFFVVGLYVTWNILMFSFYYMSTDPRIDLFCKYLGLFLIAMLLLVSAESLFQLLIGWEGVGIMSYLLISWWYARSDANTAALQAIFYNRVGDIGLLIMLMWSLVTLGDWSFTGLYALDFVNTFFLLGVVLAAAGKSAQLGLHPWLPAAMEGPTPVSSLLHSSTMVVAGVFLLIRFSPIILNHKEIQLMVFFLGTMTTLFSAICALAQNDMKKVVAFSTASQLGLMVTVVAGAGAPQLAFLHICMHAFFKAMLFMCSGGFIHGLQNEQDVRKMGGLHSAAPITSVCFFIGSAALMGVPFLAGFFSKDPIIEIININNLNSWAVGLVLIATSFTAAYSVRLLYFSVGGVSRMLVLQPMNEEYGNLIGPLQRLAYSSVIAGVVFIYFLSPNQISCLSLPLSLKLAAVFVTLVGGLIAWDVVNLLHREESVTNIPELAFEAQVGFYPLIMHKLIPKVWLNMGEMYQMQVMDRGWTELALPQGLGGNYKIMADNVVNAQTSLIKMYIAVMVMMGGLILGIMICL.

16 helical membrane-spanning segments follow: residues 1–21, 28–48, 81–101, 115–135, 171–191, 193–213, 233–253, 265–285, 302–322, 323–343, 363–383, 398–420, 455–475, 481–501, 510–530, and 577–597; these read MLEL…IFLF, FAES…ILLM, CFFV…FYYM, GLFL…QLLI, GDIG…DWSF, GLYA…LAAA, TPVS…FLLI, IQLM…ICAL, LGLM…FLHI, CMHA…IHGL, SVCF…AGFF, NSWA…VRLL, VIAG…CLSL, LAAV…VNLL, IPEL…HKLI, and LIKM…GIMI.

Belongs to the complex I subunit 5 family.

The protein resides in the mitochondrion inner membrane. It carries out the reaction a ubiquinone + NADH + 5 H(+)(in) = a ubiquinol + NAD(+) + 4 H(+)(out). In terms of biological role, core subunit of the mitochondrial membrane respiratory chain NADH dehydrogenase (Complex I) that is believed to belong to the minimal assembly required for catalysis. Complex I functions in the transfer of electrons from NADH to the respiratory chain. The immediate electron acceptor for the enzyme is believed to be ubiquinone. The protein is NADH-ubiquinone oxidoreductase chain 5 (ND5) of Branchiostoma floridae (Florida lancelet).